Here is a 619-residue protein sequence, read N- to C-terminus: Mitogen-activated protein kinase kinase kinase 2 (619 aa).

The interval 25–45 (LSLQETRKAKSSSPKKQNDVR) is disordered. At Ser-26 the chain carries Phosphoserine. A PB1 domain is found at 43–122 (DVRVKFEHRG…KSLKILLVIN (80 aa)). Phosphoserine occurs at positions 153, 159, and 164. Disordered regions lie at residues 154–173 (IIGP…IPDE), 201–248 (LDPL…QEFS), and 289–355 (RTQG…APTN). The span at 203–219 (PLSLSSPENSGSGSCPS) shows a compositional bias: low complexity. Residues Ser-239, Ser-297, Ser-311, Ser-331, Ser-344, and Ser-349 each carry the phosphoserine modification. Residues 290 to 299 (TQGTSLRSPV) are compositionally biased toward polar residues. Positions 300–315 (SFSPTDHSLSTSSGSS) are enriched in low complexity. The span at 322 to 332 (DDSRIRRRGSD) shows a compositional bias: basic and acidic residues. Residues 357 to 617 (RLGKLLGQGA…DELLRHMFVH (261 aa)) enclose the Protein kinase domain. ATP is bound by residues 362–371 (LGQGAFGRVY) and Lys-385. Asp-483 (proton acceptor) is an active-site residue.

The protein belongs to the protein kinase superfamily. STE Ser/Thr protein kinase family. MAP kinase kinase kinase subfamily. As to quaternary structure, interacts with PKN2; the interaction activates PKN2 kinase activity in a MAP3K2-independent kinase activity. Self-associates. Binds both upstream activators and downstream substrates in multimolecular complexes. Interacts (via the kinase catalytic domain) with STK38. Interacts with XIAP/BIRC4. Mg(2+) serves as cofactor. Autophosphorylated. In terms of processing, ubiquitination by XIAP/BIRC4 does not lead to proteasomal degradation.

The protein resides in the cytoplasm. The protein localises to the nucleus. It carries out the reaction L-seryl-[protein] + ATP = O-phospho-L-seryl-[protein] + ADP + H(+). The enzyme catalyses L-threonyl-[protein] + ATP = O-phospho-L-threonyl-[protein] + ADP + H(+). Its activity is regulated as follows. Activated by phosphorylation on Thr-524. Functionally, component of a protein kinase signal transduction cascade. Regulates the JNK and ERK5 pathways by phosphorylating and activating MAP2K5 and MAP2K7. Plays a role in caveolae kiss-and-run dynamics. The polypeptide is Mitogen-activated protein kinase kinase kinase 2 (MAP3K2) (Homo sapiens (Human)).